The following is a 168-amino-acid chain: Transcriptional regulator MraZ (168 aa).

SpoVT-AbrB domains follow at residues 8–51 and 90–140; these read EYNQ…GGDR and ALNM…KADI.

Belongs to the MraZ family. Forms oligomers.

It is found in the cytoplasm. The protein resides in the nucleoid. In Cereibacter sphaeroides (strain KD131 / KCTC 12085) (Rhodobacter sphaeroides), this protein is Transcriptional regulator MraZ.